Reading from the N-terminus, the 423-residue chain is O-methyltransferase aoiF (423 aa).

Asp-273 is an S-adenosyl-L-methionine binding site. The Proton acceptor role is filled by His-324.

Belongs to the class I-like SAM-binding methyltransferase superfamily. Cation-independent O-methyltransferase family.

It participates in secondary metabolite biosynthesis. Its function is as follows. O-methyltransferase; part of the gene cluster that mediates the biosynthesis of a methylated derivative of known natural products orthosporin and diaporthin. Within the pathway, aoiF catalyzes the biotransformation of orthosporin to diaporthin but also of diaporthin to the final product, by performing a tandem methylation of the polyketide core. Orthosporin is produced by an oxidoreductase that has still to be identified and that catalyzes the stereospecific reduction of the carbonyl moiety of the hexaketide isocoumarin scaffold produced by the non-reducing polyketide synthase aoiG to generate the S-configured secondary alcohol at C-11. The chain is O-methyltransferase aoiF from Aspergillus oryzae (strain ATCC 42149 / RIB 40) (Yellow koji mold).